The following is a 356-amino-acid chain: Vesicular integral-membrane protein VIP36 (356 aa).

Residues 1–44 form the signal peptide; sequence MAAEGWIWRWGWGRRCLGRPGLPGPGPGPATPLFLLLLLGPVVA. Residues 45–322 are Lumenal-facing; the sequence is DITDGNSEHL…FRSGPLTGWR (278 aa). An L-type lectin-like domain is found at 52–276; that stretch reads EHLKREHSLI…DIISMKLFQL (225 aa). Positions 96 and 131 each coordinate a carbohydrate. 3 residues coordinate Ca(2+): Asp-162, Tyr-164, and Asn-166. 164-166 provides a ligand contact to a carbohydrate; sequence YPN. Asn-183 is a glycosylation site (N-linked (GlcNAc...) asparagine). His-190 lines the a carbohydrate pocket. Ca(2+) is bound at residue Asp-193. Cys-202 and Cys-239 are joined by a disulfide. An a carbohydrate-binding site is contributed by 260–262; it reads GDL. The helical transmembrane segment at 323–345 threads the bilayer; sequence VFLLLLCALLGIIVCAVVGAVVF. The Cytoplasmic segment spans residues 346–356; the sequence is QKRQERNKRFY.

In terms of assembly, monomer. It depends on Ca(2+) as a cofactor. Expressed in kidney, liver, intestine, lung, spleen and heart. Low expression in brain.

The protein localises to the golgi apparatus membrane. Its function is as follows. Plays a role as an intracellular lectin in the early secretory pathway. Interacts with N-acetyl-D-galactosamine and high-mannose type glycans and may also bind to O-linked glycans. Involved in the transport and sorting of glycoproteins carrying high mannose-type glycans. The sequence is that of Vesicular integral-membrane protein VIP36 (LMAN2) from Canis lupus familiaris (Dog).